The sequence spans 604 residues: Ras guanine nucleotide exchange factor H (604 aa).

Residues 1–26 show a composition bias toward polar residues; that stretch reads MSNTNINVQSSTPKKSLGSSQYSLAG. The interval 1 to 61 is disordered; the sequence is MSNTNINVQS…QENSIDDSGS (61 aa). Over residues 27–49 the composition is skewed to low complexity; the sequence is SSSSNLNNINNNNNNNNNNNNNS. Residues 50 to 61 show a composition bias toward polar residues; it reads TGQENSIDDSGS. Residues 115–147 form the LisH domain; it reads NDTMLLKLIMQYFHEENLTTSLKKIQEETKVQF. One can recognise an N-terminal Ras-GEF domain in the interval 221–335; that stretch reads PDGTIKAATF…AVINLKIENY (115 aa). Positions 365 to 591 constitute a Ras-GEF domain; it reads DEEEIARQLC…EQPQLTLDLS (227 aa).

As to quaternary structure, component of the Sca1 complex composed of at least gefA, gefH, scaA, phr, and the protein phosphatase 2A subunits pppA and pho2B. Interacts directly with gefA and phr.

Its subcellular location is the cell membrane. In terms of biological role, promotes the exchange of Ras-bound GDP by GTP. Component of the Sca1 complex, a regulator of cell motility, chemotaxis and signal relay. The Sca1 complex is recruited to the plasma membrane in a chemoattractant- and F-actin-dependent manner and is enriched at the leading edge of chemotaxing cells where it regulates F-actin dynamics and signal relay by controlling the activation of rasC and the downstream target of rapamycin complex 2 (TORC2)-Akt/protein kinase B (PKB) pathway. In Dictyostelium discoideum (Social amoeba), this protein is Ras guanine nucleotide exchange factor H (gefH).